A 311-amino-acid chain; its full sequence is CAAX prenyl protease 2 (311 aa).

The next 3 helical transmembrane spans lie at 14–34, 51–71, and 94–114; these read VATC…PTVI, FICA…ILPI, and VVYP…LKLF. Glu-164 serves as the catalytic Proton donor/acceptor. A helical transmembrane segment spans residues 173–193; it reads IPLLLCAGFRINTAIFLCPVL. His-198 acts as the Proton donor/acceptor in catalysis. 3 consecutive transmembrane segments (helical) span residues 219–239, 244–264, and 268–288; these read IVGL…FLFI, LAAP…VLYA, and GLVS…LFPL.

This sequence belongs to the peptidase U48 family. As to expression, expressed in seeds, stems, leaves, flowers and siliques.

It is found in the endoplasmic reticulum membrane. It catalyses the reaction Hydrolyzes the peptide bond -P2-(S-farnesyl or geranylgeranyl)C-P1'-P2'-P3'-COOH where P1' and P2' are amino acids with aliphatic sidechains and P3' is any C-terminal residue.. With respect to regulation, inhibited in vitro by L-1-tosylamido-2-phenylethyl chloromethyl ketone (TPCK) and N-ethylmaleimide, but not by EDTA. In terms of biological role, protease involved in the processing of a variety of prenylated proteins containing the C-terminal CAAX motif, where C is a cysteine modified with an isoprenoid lipid, A is an aliphatic amino acid and X is any C-terminal amino acid. Proteolytically removes the C-terminal three residues of farnesylated and geranylated proteins, leaving the prenylated cysteine as the new C-terminus. The substrate specificity is only partially overlapping with that of FACE1. CAAX processing is likely required for subcellular targeting of prenylated proteins to the plasma membrane. In Arabidopsis thaliana (Mouse-ear cress), this protein is CAAX prenyl protease 2 (FACE2).